The following is a 329-amino-acid chain: Microtubule-associated protein RP/EB family member 1C (329 aa).

In terms of domain architecture, Calponin-homology (CH) spans Phe13 to Asp115. Basic and acidic residues predominate over residues Arg130–Lys141. A disordered region spans residues Arg130–Ala203. Residues Ser174 to Gly185 show a composition bias toward low complexity. The EB1 C-terminal domain occupies Pro193–Gly263. The required for nuclear localization stretch occupies residues Lys289–Arg311.

It belongs to the MAPRE family. In terms of assembly, homodimer. In terms of tissue distribution, highly expressed in the root and shoot meristems, in guard cells of leaf stomata, pollen grains and pollen tubes.

It localises to the nucleus. Its subcellular location is the cytoplasm. It is found in the cytoskeleton. The protein localises to the spindle. The protein resides in the phragmoplast. Functionally, plant-specific EB1 subtype that functions preferentially at early stages of plant mitosis by regulating spindle positioning and chromosome segregation. Accumulates in the prophase nucleus and is required to maintain spindle bipolarity during premetaphase and/or metaphase and for efficient segregation of chromosomes at anaphase. May play a role in the dynamics of microtubule network in elongating pollen tubes. This chain is Microtubule-associated protein RP/EB family member 1C (EB1C), found in Arabidopsis thaliana (Mouse-ear cress).